The chain runs to 423 residues: vacuole-related protein 17 (423 aa).

Residue A2 is modified to N-acetylalanine. Positions 109-134 are disordered; the sequence is ATVPNEAPNDSPQSQSTRSSLGSFQP. The interval 110 to 170 is MYO2-binding; the sequence is TVPNEAPNDS…NPINEVDCPS (61 aa). A compositionally biased stretch (polar residues) spans 116-131; that stretch reads PNDSPQSQSTRSSLGS. A Phosphoserine modification is found at S119. The residue at position 149 (T149) is a Phosphothreonine. Residues 150–211 are disordered; that stretch reads PSKPPKKSVG…SKKPSSSDTY (62 aa). S178 carries the post-translational modification Phosphoserine. The segment covering 182-192 has biased composition (basic residues); that stretch reads QPARNRTLRAA. Over residues 199–211 the composition is skewed to polar residues; the sequence is LNKSKKPSSSDTY. The residue at position 248 (T248) is a Phosphothreonine. S269 is modified (phosphoserine). The VAC8-binding stretch occupies residues 290 to 380; that stretch reads SASFFRPSNP…ISESFQSKRG (91 aa).

The protein belongs to the VAC17 family. As to quaternary structure, interacts with MYO2 and VAC8. Interacts with ATG18.

The protein resides in the vacuole membrane. Its function is as follows. Vacuole-specific MYO2 receptor required for vacuole inheritance. Binds simultaneously to MYO2 and to VAC8, a vacuolar membrane protein, forming a transport complex which moves the attached vacuole membrane along actin cables into the bud. Once the vacuole arrives in the bud, VAC17 is degraded, depositing the vacuole in its correct location. This is vacuole-related protein 17 (VAC17) from Saccharomyces cerevisiae (strain ATCC 204508 / S288c) (Baker's yeast).